The primary structure comprises 231 residues: RNA pyrophosphohydrolase (231 aa).

The region spanning Gly-6 to Thr-149 is the Nudix hydrolase domain. The Nudix box motif lies at Gly-38 to Gly-59. The disordered stretch occupies residues Val-168–Gln-200.

It belongs to the Nudix hydrolase family. RppH subfamily. A divalent metal cation is required as a cofactor.

Accelerates the degradation of transcripts by removing pyrophosphate from the 5'-end of triphosphorylated RNA, leading to a more labile monophosphorylated state that can stimulate subsequent ribonuclease cleavage. The protein is RNA pyrophosphohydrolase of Cupriavidus pinatubonensis (strain JMP 134 / LMG 1197) (Cupriavidus necator (strain JMP 134)).